A 347-amino-acid chain; its full sequence is Protein-glutamate methylesterase/protein-glutamine glutaminase (347 aa).

The Response regulatory domain maps to 3–119 (EALVVDDSHF…STELSGHSEE (117 aa)). Asp53 carries the post-translational modification 4-aspartylphosphate. The tract at residues 132 to 154 (PTAGHDVEMEPASPPDATTSEYA) is disordered. A CheB-type methylesterase domain is found at 152-346 (EYADNPTLLI…EAIADSIRRT (195 aa)). Catalysis depends on residues Ser164, His191, and Asp288.

Belongs to the CheB family. Post-translationally, phosphorylated by CheA. Phosphorylation of the N-terminal regulatory domain activates the methylesterase activity.

The protein localises to the cytoplasm. The catalysed reaction is [protein]-L-glutamate 5-O-methyl ester + H2O = L-glutamyl-[protein] + methanol + H(+). It catalyses the reaction L-glutaminyl-[protein] + H2O = L-glutamyl-[protein] + NH4(+). Involved in the modulation of the chemotaxis system; catalyzes the demethylation of specific methylglutamate residues introduced into the Htr transducer proteins (methyl-accepting chemotaxis proteins) by CheR. Also required for Htr deamidations, at least at a specific glutamine-glutamate pair in HTR-II and a specific aspartate-glutamine pair in Htr4. This chain is Protein-glutamate methylesterase/protein-glutamine glutaminase, found in Halobacterium salinarum (strain ATCC 29341 / DSM 671 / R1).